Consider the following 1064-residue polypeptide: Leucine--tRNA ligase (1064 aa).

Positions 1 to 25 are disordered; it reads MARAMSETAEPGARTGAADTTVAPT. The 'HIGH' region motif lies at 106–117; that stretch reads PYPSGSGLHVGH. The segment at 435-456 is disordered; the sequence is GRPGGGTEPADTAGPEAGADPA. Positions 831–835 match the 'KMSKS' region motif; the sequence is KMGKS. Lys834 provides a ligand contact to ATP.

It belongs to the class-I aminoacyl-tRNA synthetase family.

It is found in the cytoplasm. It carries out the reaction tRNA(Leu) + L-leucine + ATP = L-leucyl-tRNA(Leu) + AMP + diphosphate. This Frankia casuarinae (strain DSM 45818 / CECT 9043 / HFP020203 / CcI3) protein is Leucine--tRNA ligase.